Reading from the N-terminus, the 56-residue chain is MAVQQNKKSRSKRGMRRSHDALSTAQLSVDATSGEIHMRHNVTADGFYRGKKVINK.

Residues 1–26 (MAVQQNKKSRSKRGMRRSHDALSTAQ) form a disordered region. Residues 7–16 (KKSRSKRGMR) show a composition bias toward basic residues.

It belongs to the bacterial ribosomal protein bL32 family.

The polypeptide is Large ribosomal subunit protein bL32 (Shewanella baltica (strain OS155 / ATCC BAA-1091)).